The primary structure comprises 552 residues: Amino-acid acetyltransferase, mitochondrial (552 aa).

The N-terminal 32 residues, 1–32 (MIKTWIRCLTTEVRYHQPNAHGRSLVMSVLNS), are a transit peptide targeting the mitochondrion. The 167-residue stretch at 379–545 (QTGKSDPVSK…LRDYAKYVRD (167 aa)) folds into the N-acetyltransferase domain.

This sequence belongs to the acetyltransferase family.

Its subcellular location is the mitochondrion. The enzyme catalyses L-glutamate + acetyl-CoA = N-acetyl-L-glutamate + CoA + H(+). It participates in amino-acid biosynthesis; L-arginine biosynthesis; N(2)-acetyl-L-ornithine from L-glutamate: step 1/4. Functionally, N-acetylglutamate synthase involved in arginine biosynthesis. The sequence is that of Amino-acid acetyltransferase, mitochondrial (ARG2) from Kluyveromyces lactis (strain ATCC 8585 / CBS 2359 / DSM 70799 / NBRC 1267 / NRRL Y-1140 / WM37) (Yeast).